The primary structure comprises 327 residues: Acetaldehyde dehydrogenase 6 (327 aa).

NAD(+) is bound at residue 15–18 (SGNI). The Acyl-thioester intermediate role is filled by C133. Residues 164 to 172 (SAGPGTRAN) and N297 contribute to the NAD(+) site.

This sequence belongs to the acetaldehyde dehydrogenase family.

The enzyme catalyses acetaldehyde + NAD(+) + CoA = acetyl-CoA + NADH + H(+). This is Acetaldehyde dehydrogenase 6 from Rhodococcus opacus (strain B4).